The primary structure comprises 233 residues: Large ribosomal subunit protein uL1 (233 aa).

This sequence belongs to the universal ribosomal protein uL1 family. In terms of assembly, part of the 50S ribosomal subunit.

Functionally, binds directly to 23S rRNA. The L1 stalk is quite mobile in the ribosome, and is involved in E site tRNA release. Its function is as follows. Protein L1 is also a translational repressor protein, it controls the translation of the L11 operon by binding to its mRNA. The chain is Large ribosomal subunit protein uL1 from Shewanella frigidimarina (strain NCIMB 400).